We begin with the raw amino-acid sequence, 63 residues long: Large ribosomal subunit protein uL29 (63 aa).

Belongs to the universal ribosomal protein uL29 family.

This chain is Large ribosomal subunit protein uL29, found in Shewanella denitrificans (strain OS217 / ATCC BAA-1090 / DSM 15013).